We begin with the raw amino-acid sequence, 196 residues long: Probable malonic semialdehyde reductase RutE (196 aa).

The protein belongs to the nitroreductase family. HadB/RutE subfamily. Requires FMN as cofactor.

It carries out the reaction 3-hydroxypropanoate + NADP(+) = 3-oxopropanoate + NADPH + H(+). In terms of biological role, may reduce toxic product malonic semialdehyde to 3-hydroxypropionic acid, which is excreted. This is Probable malonic semialdehyde reductase RutE from Escherichia coli O8 (strain IAI1).